The primary structure comprises 158 residues: NAD(P)H-quinone oxidoreductase subunit J, chloroplastic (158 aa).

The protein belongs to the complex I 30 kDa subunit family. As to quaternary structure, NDH is composed of at least 16 different subunits, 5 of which are encoded in the nucleus.

It localises to the plastid. The protein resides in the chloroplast thylakoid membrane. It carries out the reaction a plastoquinone + NADH + (n+1) H(+)(in) = a plastoquinol + NAD(+) + n H(+)(out). The enzyme catalyses a plastoquinone + NADPH + (n+1) H(+)(in) = a plastoquinol + NADP(+) + n H(+)(out). NDH shuttles electrons from NAD(P)H:plastoquinone, via FMN and iron-sulfur (Fe-S) centers, to quinones in the photosynthetic chain and possibly in a chloroplast respiratory chain. The immediate electron acceptor for the enzyme in this species is believed to be plastoquinone. Couples the redox reaction to proton translocation, and thus conserves the redox energy in a proton gradient. This chain is NAD(P)H-quinone oxidoreductase subunit J, chloroplastic, found in Citrus sinensis (Sweet orange).